We begin with the raw amino-acid sequence, 696 residues long: Protein OS-9 homolog (696 aa).

Residues 1–15 form the signal peptide; it reads MLVVAFASLLGAARA. N-linked (GlcNAc...) asparagine glycans are attached at residues Asn35, Asn46, and Asn68. The MRH domain maps to 106-224; it reads NQCLVSQNGF…QVIVPDLCQL (119 aa). Cysteines 108 and 121 form a disulfide. Residues Trp116, Gln128, Asp178, Arg184, Glu206, and Tyr212 each coordinate a mannooligosaccharide derivative. Disulfide bonds link Cys177–Cys210 and Cys192–Cys222. N-linked (GlcNAc...) asparagine glycosylation is found at Asn276, Asn290, and Asn372. Disordered regions lie at residues 450–600 and 667–696; these read IEAS…DNSD and TLGN…DDEL. Over residues 458–467 the composition is skewed to polar residues; that stretch reads TKASESTPVS. Residues 482 to 498 show a composition bias toward basic and acidic residues; it reads RSRDKEEYFKENEKQGE. Polar residues-rich tracts occupy residues 499–518, 528–553, and 585–597; these read ENNA…GTIS, NQKQ…SAND, and NIDN…TLND. Asn588 carries N-linked (GlcNAc...) asparagine glycosylation. Basic and acidic residues predominate over residues 685–696; the sequence is ESDRNGVIDDEL.

It belongs to the OS-9 family. Interacts with missfolded ER lumenal proteins.

The protein localises to the endoplasmic reticulum membrane. Lectin involved in the quality control of the secretory pathway. As a member of the endoplasmic reticulum-associated degradation lumenal (ERAD-L) surveillance system, targets misfolded endoplasmic reticulum lumenal glycoproteins for degradation. This is Protein OS-9 homolog (YOS9) from Candida glabrata (strain ATCC 2001 / BCRC 20586 / JCM 3761 / NBRC 0622 / NRRL Y-65 / CBS 138) (Yeast).